The primary structure comprises 89 residues: Small ribosomal subunit protein uS15 (89 aa).

It belongs to the universal ribosomal protein uS15 family. In terms of assembly, part of the 30S ribosomal subunit. Forms a bridge to the 50S subunit in the 70S ribosome, contacting the 23S rRNA.

In terms of biological role, one of the primary rRNA binding proteins, it binds directly to 16S rRNA where it helps nucleate assembly of the platform of the 30S subunit by binding and bridging several RNA helices of the 16S rRNA. Functionally, forms an intersubunit bridge (bridge B4) with the 23S rRNA of the 50S subunit in the ribosome. This chain is Small ribosomal subunit protein uS15, found in Pseudomonas fluorescens (strain ATCC BAA-477 / NRRL B-23932 / Pf-5).